The following is a 229-amino-acid chain: Putative N-acetylmannosamine-6-phosphate 2-epimerase (229 aa).

Belongs to the NanE family.

The enzyme catalyses an N-acyl-D-glucosamine 6-phosphate = an N-acyl-D-mannosamine 6-phosphate. It participates in amino-sugar metabolism; N-acetylneuraminate degradation; D-fructose 6-phosphate from N-acetylneuraminate: step 3/5. In terms of biological role, converts N-acetylmannosamine-6-phosphate (ManNAc-6-P) to N-acetylglucosamine-6-phosphate (GlcNAc-6-P). The sequence is that of Putative N-acetylmannosamine-6-phosphate 2-epimerase from Actinobacillus pleuropneumoniae serotype 3 (strain JL03).